Consider the following 632-residue polypeptide: tRNA uridine 5-carboxymethylaminomethyl modification enzyme MnmG (632 aa).

FAD contacts are provided by residues 15-20, I127, and S182; that span reads GAGHAG. 276–290 contributes to the NAD(+) binding site; sequence GPRYCPSIEDKIVRF. Q373 serves as a coordination point for FAD.

The protein belongs to the MnmG family. In terms of assembly, homodimer. Heterotetramer of two MnmE and two MnmG subunits. It depends on FAD as a cofactor.

Its subcellular location is the cytoplasm. Its function is as follows. NAD-binding protein involved in the addition of a carboxymethylaminomethyl (cmnm) group at the wobble position (U34) of certain tRNAs, forming tRNA-cmnm(5)s(2)U34. This chain is tRNA uridine 5-carboxymethylaminomethyl modification enzyme MnmG, found in Streptococcus pyogenes serotype M18 (strain MGAS8232).